The primary structure comprises 235 residues: Succinate dehydrogenase iron-sulfur subunit (235 aa).

Residues cysteine 53, cysteine 58, and cysteine 73 each coordinate [2Fe-2S] cluster. A 4Fe-4S ferredoxin-type domain is found at 133-163 (ERAKLDGLYECILCACCSSSCPSYWWNPDKF). [4Fe-4S] cluster-binding residues include cysteine 143, cysteine 146, and cysteine 149. Cysteine 153 provides a ligand contact to [3Fe-4S] cluster. Tryptophan 158 contributes to the a ubiquinone binding site. [3Fe-4S] cluster-binding residues include cysteine 200 and cysteine 206. Cysteine 210 contributes to the [4Fe-4S] cluster binding site.

This sequence belongs to the succinate dehydrogenase/fumarate reductase iron-sulfur protein family. Part of an enzyme complex containing four subunits: a flavoprotein, an iron-sulfur protein, cytochrome b-556 and a hydrophobic protein. The cofactor is [2Fe-2S] cluster. [3Fe-4S] cluster serves as cofactor. It depends on [4Fe-4S] cluster as a cofactor.

It catalyses the reaction a quinone + succinate = fumarate + a quinol. Its pathway is carbohydrate metabolism; tricarboxylic acid cycle; fumarate from succinate (bacterial route): step 1/1. This is Succinate dehydrogenase iron-sulfur subunit (sdhB) from Coxiella burnetii (strain RSA 493 / Nine Mile phase I).